Consider the following 480-residue polypeptide: ATP synthase subunit beta (480 aa).

158–165 lines the ATP pocket; that stretch reads GGAGVGKT.

Belongs to the ATPase alpha/beta chains family. In terms of assembly, F-type ATPases have 2 components, CF(1) - the catalytic core - and CF(0) - the membrane proton channel. CF(1) has five subunits: alpha(3), beta(3), gamma(1), delta(1), epsilon(1). CF(0) has three main subunits: a(1), b(2) and c(9-12). The alpha and beta chains form an alternating ring which encloses part of the gamma chain. CF(1) is attached to CF(0) by a central stalk formed by the gamma and epsilon chains, while a peripheral stalk is formed by the delta and b chains.

Its subcellular location is the cell inner membrane. The enzyme catalyses ATP + H2O + 4 H(+)(in) = ADP + phosphate + 5 H(+)(out). Functionally, produces ATP from ADP in the presence of a proton gradient across the membrane. The catalytic sites are hosted primarily by the beta subunits. This is ATP synthase subunit beta from Koribacter versatilis (strain Ellin345).